Here is a 336-residue protein sequence, read N- to C-terminus: Aspartate--ammonia ligase (336 aa).

The protein belongs to the class-II aminoacyl-tRNA synthetase family. AsnA subfamily.

The protein localises to the cytoplasm. The enzyme catalyses L-aspartate + NH4(+) + ATP = L-asparagine + AMP + diphosphate + H(+). It functions in the pathway amino-acid biosynthesis; L-asparagine biosynthesis; L-asparagine from L-aspartate (ammonia route): step 1/1. The chain is Aspartate--ammonia ligase from Clostridium perfringens (strain SM101 / Type A).